The primary structure comprises 1248 residues: Kinesin-like protein KIN-14I (1248 aa).

Residues 88–244 (FQKDPIPTSL…PAREEIEALL (157 aa)) enclose the MyTH4 domain. Residues 249–563 (LTTIVFFLDE…HINDVMLRRY (315 aa)) enclose the FERM domain. Positions 586–659 (NIEIYEKRVQ…LDKLKSLCDE (74 aa)) form a coiled coil. Positions 675–704 (ETRLKSGQGQESSNRTGVSGNHFERDTLPT) are disordered. A compositionally biased stretch (polar residues) spans 679–693 (KSGQGQESSNRTGVS). Positions 708–799 (VNNSIEMLAK…TRSLNVTEST (92 aa)) form a coiled coil. One can recognise a Kinesin motor domain in the interval 872–1193 (KIRVFCRLRP…LMYASRVRCI (322 aa)). 953 to 960 (GQTGSGKT) contributes to the ATP binding site. The calmodulin-binding stretch occupies residues 1201 to 1223 (VAPKEIMRLKKLIAYWKEQAGKR). Residues 1220 to 1248 (AGKRSEDDDLEEIQEERTPKEKADNRLTS) are disordered. Basic and acidic residues predominate over residues 1234 to 1248 (EERTPKEKADNRLTS).

Belongs to the TRAFAC class myosin-kinesin ATPase superfamily. Kinesin family. KIN-14 subfamily. Binds microtubules via its N-terminus containing the MyTH4 domain and binds F-actin via its FERM domain. Binding to calmodulin inhibits microtubule binding activity.

The protein resides in the cytoplasm. It is found in the cytoskeleton. Functionally, minus-end microtubule-dependent motor protein involved in the regulation of cell division. This is Kinesin-like protein KIN-14I from Oryza sativa subsp. japonica (Rice).